The following is a 96-amino-acid chain: Co-chaperonin GroES (96 aa).

The protein belongs to the GroES chaperonin family. As to quaternary structure, heptamer of 7 subunits arranged in a ring. Interacts with the chaperonin GroEL.

It localises to the cytoplasm. Its function is as follows. Together with the chaperonin GroEL, plays an essential role in assisting protein folding. The GroEL-GroES system forms a nano-cage that allows encapsulation of the non-native substrate proteins and provides a physical environment optimized to promote and accelerate protein folding. GroES binds to the apical surface of the GroEL ring, thereby capping the opening of the GroEL channel. The polypeptide is Co-chaperonin GroES (Legionella pneumophila (strain Paris)).